We begin with the raw amino-acid sequence, 132 residues long: Small ribosomal subunit protein uS8 (132 aa).

It belongs to the universal ribosomal protein uS8 family. As to quaternary structure, part of the 30S ribosomal subunit. Contacts proteins S5 and S12.

In terms of biological role, one of the primary rRNA binding proteins, it binds directly to 16S rRNA central domain where it helps coordinate assembly of the platform of the 30S subunit. This Xanthomonas campestris pv. campestris (strain 8004) protein is Small ribosomal subunit protein uS8.